Consider the following 273-residue polypeptide: Undecaprenyl-diphosphatase (273 aa).

The next 6 membrane-spanning stretches (helical) occupy residues 43-63, 82-102, 109-129, 185-205, 214-234, and 249-269; these read IGNV…CWEY, KFVL…VLLI, LFNP…ILWA, TEFS…YDVL, ADLP…FVAV, and FAWY…LGWI.

The protein belongs to the UppP family.

It is found in the cell inner membrane. It carries out the reaction di-trans,octa-cis-undecaprenyl diphosphate + H2O = di-trans,octa-cis-undecaprenyl phosphate + phosphate + H(+). In terms of biological role, catalyzes the dephosphorylation of undecaprenyl diphosphate (UPP). Confers resistance to bacitracin. This chain is Undecaprenyl-diphosphatase, found in Laribacter hongkongensis (strain HLHK9).